The primary structure comprises 291 residues: 4-hydroxy-tetrahydrodipicolinate synthase (291 aa).

T45 contributes to the pyruvate binding site. Y133 serves as the catalytic Proton donor/acceptor. K161 acts as the Schiff-base intermediate with substrate in catalysis. Pyruvate is bound at residue I203.

This sequence belongs to the DapA family. In terms of assembly, homotetramer; dimer of dimers.

The protein resides in the cytoplasm. The catalysed reaction is L-aspartate 4-semialdehyde + pyruvate = (2S,4S)-4-hydroxy-2,3,4,5-tetrahydrodipicolinate + H2O + H(+). It functions in the pathway amino-acid biosynthesis; L-lysine biosynthesis via DAP pathway; (S)-tetrahydrodipicolinate from L-aspartate: step 3/4. In terms of biological role, catalyzes the condensation of (S)-aspartate-beta-semialdehyde [(S)-ASA] and pyruvate to 4-hydroxy-tetrahydrodipicolinate (HTPA). This is 4-hydroxy-tetrahydrodipicolinate synthase from Laribacter hongkongensis (strain HLHK9).